Here is a 251-residue protein sequence, read N- to C-terminus: Transcription factor bHLH144 (251 aa).

3 disordered regions span residues 1-20 (MQNN…NMHN), 130-161 (YEEN…YGNT), and 173-202 (NNNN…RKKM). Basic and acidic residues predominate over residues 9 to 18 (FSDEVGDRNM). Over residues 130-147 (YEENDDNEGEEDGGDSEE) the composition is skewed to acidic residues. Residues 148–161 (VSTARTSSRDYGNT) are compositionally biased toward polar residues. Low complexity predominate over residues 173-192 (NNNNNNNSRKQSLSGSASSS). The 50-residue stretch at 186 to 235 (SGSASSSNNDGKGRKKMKKMMGVLRRIVPGGEQMNTACVLDEAVQYLKSL) folds into the bHLH domain.

As to quaternary structure, homodimer. Interacts with LHW.

The protein resides in the nucleus. The sequence is that of Transcription factor bHLH144 (BHLH144) from Arabidopsis thaliana (Mouse-ear cress).